The following is a 313-amino-acid chain: Aspartate carbamoyltransferase catalytic subunit (313 aa).

Residues arginine 53 and threonine 54 each contribute to the carbamoyl phosphate site. Residue lysine 82 coordinates L-aspartate. Carbamoyl phosphate is bound by residues arginine 103, histidine 131, and glutamine 134. 2 residues coordinate L-aspartate: arginine 163 and arginine 224. Residues leucine 263 and proline 264 each contribute to the carbamoyl phosphate site.

It belongs to the aspartate/ornithine carbamoyltransferase superfamily. ATCase family. In terms of assembly, heterooligomer of catalytic and regulatory chains.

It catalyses the reaction carbamoyl phosphate + L-aspartate = N-carbamoyl-L-aspartate + phosphate + H(+). Its pathway is pyrimidine metabolism; UMP biosynthesis via de novo pathway; (S)-dihydroorotate from bicarbonate: step 2/3. Functionally, catalyzes the condensation of carbamoyl phosphate and aspartate to form carbamoyl aspartate and inorganic phosphate, the committed step in the de novo pyrimidine nucleotide biosynthesis pathway. This chain is Aspartate carbamoyltransferase catalytic subunit, found in Halorubrum lacusprofundi (strain ATCC 49239 / DSM 5036 / JCM 8891 / ACAM 34).